The chain runs to 491 residues: Serine hydroxymethyltransferase (491 aa).

(6S)-5,6,7,8-tetrahydrofolate contacts are provided by residues L173 and 177–179 (GHL). K285 carries the post-translational modification N6-(pyridoxal phosphate)lysine.

The protein belongs to the SHMT family. In terms of assembly, homodimer. It depends on pyridoxal 5'-phosphate as a cofactor.

It is found in the cytoplasm. The catalysed reaction is (6R)-5,10-methylene-5,6,7,8-tetrahydrofolate + glycine + H2O = (6S)-5,6,7,8-tetrahydrofolate + L-serine. It functions in the pathway one-carbon metabolism; tetrahydrofolate interconversion. It participates in amino-acid biosynthesis; glycine biosynthesis; glycine from L-serine: step 1/1. Functionally, catalyzes the reversible interconversion of serine and glycine with tetrahydrofolate (THF) serving as the one-carbon carrier. This reaction serves as the major source of one-carbon groups required for the biosynthesis of purines, thymidylate, methionine, and other important biomolecules. Also exhibits THF-independent aldolase activity toward beta-hydroxyamino acids, producing glycine and aldehydes, via a retro-aldol mechanism. The sequence is that of Serine hydroxymethyltransferase from Cutibacterium acnes (strain DSM 16379 / KPA171202) (Propionibacterium acnes).